The chain runs to 280 residues: Truncated lectin 2 (280 aa).

The first 26 residues, 1-26 (MSSSNFSCILSISLTFFILLLNKVNS), serve as a signal peptide directing secretion. Positions 148 and 150 each coordinate Mn(2+). Ca(2+)-binding residues include Asp150, Phe152, Asn154, and Asp158. Residue Asp158 coordinates Mn(2+). Asn163 carries N-linked (GlcNAc...) asparagine glycosylation. A Mn(2+)-binding site is contributed by His170. Asn272 carries N-linked (GlcNAc...) asparagine glycosylation.

Belongs to the leguminous lectin family.

The sequence is that of Truncated lectin 2 (LEC2) from Medicago truncatula (Barrel medic).